Consider the following 209-residue polypeptide: Uracil phosphoribosyltransferase (209 aa).

5-phospho-alpha-D-ribose 1-diphosphate is bound by residues R79, R104, and 131–139; that span reads DPMLATGGS. Uracil is bound by residues I194 and 199–201; that span reads GDA. 5-phospho-alpha-D-ribose 1-diphosphate is bound at residue D200.

It belongs to the UPRTase family. The cofactor is Mg(2+).

The enzyme catalyses UMP + diphosphate = 5-phospho-alpha-D-ribose 1-diphosphate + uracil. The protein operates within pyrimidine metabolism; UMP biosynthesis via salvage pathway; UMP from uracil: step 1/1. Allosterically activated by GTP. Its function is as follows. Catalyzes the conversion of uracil and 5-phospho-alpha-D-ribose 1-diphosphate (PRPP) to UMP and diphosphate. This Halalkalibacterium halodurans (strain ATCC BAA-125 / DSM 18197 / FERM 7344 / JCM 9153 / C-125) (Bacillus halodurans) protein is Uracil phosphoribosyltransferase.